Consider the following 405-residue polypeptide: Alpha-1-antiproteinase S (405 aa).

The N-terminal stretch at 1–24 is a signal peptide; that stretch reads MPSAIPRGLLLLAGLCCLVFGIMA. 4 N-linked (GlcNAc...) asparagine glycosylation sites follow: Asn-57, Asn-94, Asn-157, and Asn-258. The interval 360 to 379 is RCL; sequence GATMMEFMPMSLPEDLSFNK.

It belongs to the serpin family.

It localises to the secreted. Inhibits elastase, chymotrypsin, cathepsin G, plasmin, and trypsin. The protein is Alpha-1-antiproteinase S of Cavia porcellus (Guinea pig).